The chain runs to 276 residues: Large ribosomal subunit protein uL2c (276 aa).

Positions 221–276 (RGSVMNPVDHPHGGGEGRAPIGRSRPVTPWGKPALGQKTRKPKKQSNKLILRKRKK) are disordered. Positions 258–276 (KTRKPKKQSNKLILRKRKK) are enriched in basic residues.

Belongs to the universal ribosomal protein uL2 family. As to quaternary structure, part of the 50S ribosomal subunit.

Its subcellular location is the plastid. It localises to the chloroplast. This chain is Large ribosomal subunit protein uL2c (rpl2), found in Stigeoclonium helveticum (Green alga).